The following is a 96-amino-acid chain: Co-chaperonin GroES (96 aa).

It belongs to the GroES chaperonin family. In terms of assembly, heptamer of 7 subunits arranged in a ring. Interacts with the chaperonin GroEL.

Its subcellular location is the cytoplasm. Together with the chaperonin GroEL, plays an essential role in assisting protein folding. The GroEL-GroES system forms a nano-cage that allows encapsulation of the non-native substrate proteins and provides a physical environment optimized to promote and accelerate protein folding. GroES binds to the apical surface of the GroEL ring, thereby capping the opening of the GroEL channel. The chain is Co-chaperonin GroES from Histophilus somni (strain 129Pt) (Haemophilus somnus).